The chain runs to 103 residues: Large ribosomal subunit protein uL24 (103 aa).

Belongs to the universal ribosomal protein uL24 family. As to quaternary structure, part of the 50S ribosomal subunit.

Its function is as follows. One of two assembly initiator proteins, it binds directly to the 5'-end of the 23S rRNA, where it nucleates assembly of the 50S subunit. Functionally, one of the proteins that surrounds the polypeptide exit tunnel on the outside of the subunit. This Haemophilus influenzae (strain PittEE) protein is Large ribosomal subunit protein uL24.